Reading from the N-terminus, the 1956-residue chain is Sodium channel protein type 10 subunit alpha (1956 aa).

The Cytoplasmic segment spans residues 1–125 (MEFPIGSLET…FNLIRRTAIK (125 aa)). Residues 27-54 (QIAAKQGTKKAREKHREQKDQEEKPRPQ) form a disordered region. Residues 40-54 (KHREQKDQEEKPRPQ) are compositionally biased toward basic and acidic residues. One copy of the I repeat lies at 116-405 (FNLIRRTAIK…VTMAYEEQNQ (290 aa)). A helical membrane pass occupies residues 126–149 (VSVHSWFSLFITVTILVNCVCMTR). Residues 150-154 (TDLPE) are Extracellular-facing. A helical transmembrane segment spans residues 155 to 174 (KIEYVFTVIYTFEALIKILA). At 175–187 (RGFCLNEFTYLRD) the chain is on the cytoplasmic side. A helical membrane pass occupies residues 188–206 (PWNWLDFSVITLAYVGTAI). Topologically, residues 207–212 (DLRGIS) are extracellular. Residues 213-232 (GLRTFRVLRALKTVSVIPGL) form a helical; Voltage-sensor membrane-spanning segment. Topologically, residues 233–248 (KVIVGALIHSVKKLAD) are cytoplasmic. A helical membrane pass occupies residues 249 to 272 (VTILTIFCLSVFALVGLQLFKGNL). Over 273–341 (KNKCVKNDMA…PDFNYTSFDS (69 aa)) the chain is Extracellular. A disulfide bond links Cys276 and Cys319. Residues Asn284, Asn288, Asn312, and Asn335 are each glycosylated (N-linked (GlcNAc...) asparagine). Residues 342-366 (FAWAFLSLFRLMTQDSWERLYQQTL) constitute an intramembrane region (pore-forming). Residues 367–373 (RTSGKIY) lie on the Extracellular side of the membrane. A helical membrane pass occupies residues 374–399 (MIFFVLVIFLGSFYLVNLILAVVTMA). At 400–659 (YEEQNQATTD…MWVKLKTILF (260 aa)) the chain is on the cytoplasmic side. Phosphoserine is present on residues Ser441, Ser444, Ser467, and Ser479. Residues 443 to 454 (HSHNGSPLTSKN) show a composition bias toward polar residues. Disordered stretches follow at residues 443-485 (HSHN…YNQR) and 500-580 (SHGS…LAPG). Over residues 561 to 570 (DSRHGEDEHQ) the composition is skewed to basic and acidic residues. Phosphoserine occurs at positions 612 and 615. Residues 647 to 911 (CCPMWVKLKT…EDDGEVNNLQ (265 aa)) form an II repeat. Residues 660–684 (GLVTDPFAELTITLCIVVNTIFMAM) traverse the membrane as a helical segment. Topologically, residues 685–695 (EHHGMSPTFEA) are extracellular. The chain crosses the membrane as a helical span at residues 696 to 719 (MLQIGNIVFTIFFTAEMVFKIIAF). Residues 720–727 (DPYYYFQK) lie on the Cytoplasmic side of the membrane. A helical transmembrane segment spans residues 728–747 (KWNIFDCIIVTVSLLELGVA). At 748-753 (KKGSLS) the chain is on the extracellular side. A helical; Voltage-sensor membrane pass occupies residues 754-773 (VLRSFRLLRVFKLAKSWPTL). Topologically, residues 774–789 (NTLIKIIGNSVGALGN) are cytoplasmic. The chain crosses the membrane as a helical span at residues 790 to 810 (LTIILAIIVFVFALVGKQLLG). Over 811-834 (ENYRNNRKNISAPHEDWPRWHMHD) the chain is Extracellular. The N-linked (GlcNAc...) asparagine glycan is linked to Asn819. An intramembrane region (pore-forming) is located at residues 835–855 (FFHSFLIVFRILCGEWIENMW). Residues 856–864 (ACMEVGQKS) are Extracellular-facing. A disulfide bond links Cys857 and Cys866. The helical transmembrane segment at 865 to 890 (ICLILFLTVMVLGNLVVLNLFIALLL) threads the bilayer. Residues 891-1147 (NSFSADNLTA…GWQVRKTCYR (257 aa)) are Cytoplasmic-facing. Disordered stretches follow at residues 963–986 (AANT…EHSD) and 1041–1089 (DHLT…GSTV). One copy of the III repeat lies at 1140–1449 (QVRKTCYRIV…KKYYNAMKKL (310 aa)). The helical transmembrane segment at 1148-1171 (IVEHSWFESFIIFMILLSSGSLAF) threads the bilayer. Residues 1172–1184 (EDYYLDQKPTVKA) lie on the Extracellular side of the membrane. The helical transmembrane segment at 1185 to 1210 (LLEYTDRVFTFIFVFEMLLKWVAYGF) threads the bilayer. At 1211-1216 (KKYFTN) the chain is on the cytoplasmic side. The helical transmembrane segment at 1217–1238 (AWCWLDFLIVNISLISLTAKIL) threads the bilayer. At 1239–1242 (EYSE) the chain is on the extracellular side. Residues 1243–1264 (VAPIKALRTLRALRPLRALSRF) form a helical; Voltage-sensor membrane-spanning segment. Topologically, residues 1265 to 1283 (EGMRVVVDALVGAIPSIMN) are cytoplasmic. A helical membrane pass occupies residues 1284-1311 (VLLVCLIFWLIFSIMGVNLFAGKFWRCI). Residues Asn1312, Asn1328, and Asn1336 are each glycosylated (N-linked (GlcNAc...) asparagine). At 1312–1353 (NYTDGEFSLVPLSIVNNKSDCKIQNSTGSFFWVNVKVNFDNV) the chain is on the extracellular side. Positions 1354-1375 (AMGYLALLQVATFKGWMDIMYA) form an intramembrane region, pore-forming. Topologically, residues 1376–1391 (AVDSREVNMQPKWEDN) are extracellular. A helical transmembrane segment spans residues 1392–1418 (VYMYLYFVIFIIFGGFFTLNLFVGVII). Residues 1419 to 1471 (DNFNQQKKKLGGQDIFMTEEQKKYYNAMKKLGSKKPQKPIPRPLNKFQGFVFD) lie on the Cytoplasmic side of the membrane. A Phosphoserine; by PKC modification is found at Ser1451. The stretch at 1458–1757 (IPRPLNKFQG…WEKFDPEATQ (300 aa)) is one IV repeat. Residues 1472-1495 (IVTRQAFDITIMVLICLNMITMMV) traverse the membrane as a helical segment. The Extracellular portion of the chain corresponds to 1496-1506 (ETDDQSEEKTK). Residues 1507–1530 (ILGKINQFFVAVFTGECVMKMFAL) form a helical membrane-spanning segment. The Cytoplasmic segment spans residues 1531-1536 (RQYYFT). A helical transmembrane segment spans residues 1537-1560 (NGWNVFDFIVVVLSIASLIFSAIL). The Extracellular portion of the chain corresponds to 1561-1572 (KSLQSYFSPTLF). A helical; Voltage-sensor transmembrane segment spans residues 1573–1594 (RVIRLARIGRILRLIRAAKGIR). At 1595 to 1609 (TLLFALMMSLPALFN) the chain is on the cytoplasmic side. A helical membrane pass occupies residues 1610 to 1632 (IGLLLFLVMFIYSIFGMSSFPHV). The Extracellular segment spans residues 1633-1646 (RWEAGIDDMFNFQT). The pore-forming intramembrane region spans 1647-1669 (FANSMLCLFQITTSAGWDGLLSP). The Extracellular portion of the chain corresponds to 1670 to 1697 (ILNTGPPYCDPNLPNSNGTRGDCGSPAV). The N-linked (GlcNAc...) asparagine glycan is linked to Asn1686. The chain crosses the membrane as a helical span at residues 1698-1722 (GIIFFTTYIIISFLIMVNMYIAVIL). At 1723–1956 (ENFNVATEES…TSMELIAPGP (234 aa)) the chain is on the cytoplasmic side. Positions 1851-1880 (EDISATVIQKAYRSYVLHRSMALSNTPCVP) constitute an IQ domain. The disordered stretch occupies residues 1909 to 1956 (SETASATSFPPSYESVTRGLSDRVNMRTSSSIQNEDEATSMELIAPGP).

The protein belongs to the sodium channel (TC 1.A.1.10) family. Nav1.8/SCN10A subfamily. As to quaternary structure, the channel consists of an ion conducting pore forming alpha-subunit regulated by one or more associated auxiliary subunits SCN1B, SCN2B and SCN3B; electrophysiological properties may vary depending on the type of the associated beta subunits. Found in a number of complexes with PRX, DYNLT1 and PDZD2. Interacts with proteins such as FSTL1, PRX, DYNLT1, PDZD2, S100A10 and many others. Interacts with NEDD4 and NEDD4L. In terms of processing, ubiquitinated by NEDD4L; which promotes its endocytosis. Phosphorylation at Ser-1451 by PKC in a highly conserved cytoplasmic loop slows inactivation of the sodium channel and reduces peak sodium currents. Post-translationally, lacks the cysteine which covalently binds the conotoxin GVIIJ. This cysteine (position 816) is speculated in other sodium channel subunits alpha to be implied in covalent binding with the sodium channel subunit beta-2 or beta-4. Expressed in the dorsal root ganglia and sciatic nerve.

It is found in the cell membrane. The catalysed reaction is Na(+)(in) = Na(+)(out). Tetrodotoxin-resistant channel that mediates the voltage-dependent sodium ion permeability of excitable membranes. Assuming opened or closed conformations in response to the voltage difference across the membrane, the protein forms a sodium-selective channel through which sodium ions may pass in accordance with their electrochemical gradient. Plays a role in neuropathic pain mechanisms. The chain is Sodium channel protein type 10 subunit alpha from Homo sapiens (Human).